A 288-amino-acid chain; its full sequence is Small ribosomal subunit protein uS2 (288 aa).

Residues 255–288 form a disordered region; sequence ANNRDHKNNKNNSTIDNAENLKEENLVGGSNNES.

Belongs to the universal ribosomal protein uS2 family.

The chain is Small ribosomal subunit protein uS2 from Ehrlichia chaffeensis (strain ATCC CRL-10679 / Arkansas).